The chain runs to 753 residues: 5-methyltetrahydropteroyltriglutamate--homocysteine methyltransferase (753 aa).

5-methyltetrahydropteroyltri-L-glutamate contacts are provided by residues 17-20 (RELK) and Lys117. L-homocysteine-binding positions include 431-433 (IGS) and Glu484. Residues 431 to 433 (IGS) and Glu484 contribute to the L-methionine site. 5-methyltetrahydropteroyltri-L-glutamate contacts are provided by residues 515–516 (RC) and Trp561. Asp599 serves as a coordination point for L-homocysteine. Asp599 is an L-methionine binding site. A 5-methyltetrahydropteroyltri-L-glutamate-binding site is contributed by Glu605. Positions 641, 643, and 665 each coordinate Zn(2+). The active-site Proton donor is His694. Cys726 is a Zn(2+) binding site.

It belongs to the vitamin-B12 independent methionine synthase family. It depends on Zn(2+) as a cofactor.

The enzyme catalyses 5-methyltetrahydropteroyltri-L-glutamate + L-homocysteine = tetrahydropteroyltri-L-glutamate + L-methionine. It participates in amino-acid biosynthesis; L-methionine biosynthesis via de novo pathway; L-methionine from L-homocysteine (MetE route): step 1/1. In terms of biological role, catalyzes the transfer of a methyl group from 5-methyltetrahydrofolate to homocysteine resulting in methionine formation. The polypeptide is 5-methyltetrahydropteroyltriglutamate--homocysteine methyltransferase (Citrobacter koseri (strain ATCC BAA-895 / CDC 4225-83 / SGSC4696)).